The sequence spans 191 residues: Protein Ves (191 aa).

It belongs to the Ves family.

The protein is Protein Ves of Escherichia coli O127:H6 (strain E2348/69 / EPEC).